The following is a 228-amino-acid chain: Probable septum site-determining protein MinC (228 aa).

This sequence belongs to the MinC family. As to quaternary structure, interacts with MinD and FtsZ.

Functionally, cell division inhibitor that blocks the formation of polar Z ring septums. Rapidly oscillates between the poles of the cell to destabilize FtsZ filaments that have formed before they mature into polar Z rings. Prevents FtsZ polymerization. The protein is Probable septum site-determining protein MinC of Symbiobacterium thermophilum (strain DSM 24528 / JCM 14929 / IAM 14863 / T).